Reading from the N-terminus, the 367-residue chain is Leu/Ile/Val-binding protein (367 aa).

Positions 1–23 (MNMKGKALLAGCIALSLSNMAFA) are cleaved as a signal peptide. Cysteine 76 and cysteine 101 are disulfide-bonded.

Belongs to the leucine-binding protein family.

The protein resides in the periplasm. In terms of biological role, this protein is a component of the leucine, isoleucine, valine, (threonine) transport system, which is one of the two periplasmic binding protein-dependent transport systems of the high-affinity transport of the branched-chain amino acids. This chain is Leu/Ile/Val-binding protein (livJ), found in Citrobacter freundii.